Here is a 323-residue protein sequence, read N- to C-terminus: Lipoyl synthase (323 aa).

[4Fe-4S] cluster contacts are provided by cysteine 53, cysteine 58, cysteine 64, cysteine 79, cysteine 83, cysteine 86, and serine 293. The Radical SAM core domain maps to 65–282 (WTKKQATVMI…AATARAKGFS (218 aa)).

Belongs to the radical SAM superfamily. Lipoyl synthase family. [4Fe-4S] cluster serves as cofactor.

The protein resides in the cytoplasm. It carries out the reaction [[Fe-S] cluster scaffold protein carrying a second [4Fe-4S](2+) cluster] + N(6)-octanoyl-L-lysyl-[protein] + 2 oxidized [2Fe-2S]-[ferredoxin] + 2 S-adenosyl-L-methionine + 4 H(+) = [[Fe-S] cluster scaffold protein] + N(6)-[(R)-dihydrolipoyl]-L-lysyl-[protein] + 4 Fe(3+) + 2 hydrogen sulfide + 2 5'-deoxyadenosine + 2 L-methionine + 2 reduced [2Fe-2S]-[ferredoxin]. It functions in the pathway protein modification; protein lipoylation via endogenous pathway; protein N(6)-(lipoyl)lysine from octanoyl-[acyl-carrier-protein]: step 2/2. In terms of biological role, catalyzes the radical-mediated insertion of two sulfur atoms into the C-6 and C-8 positions of the octanoyl moiety bound to the lipoyl domains of lipoate-dependent enzymes, thereby converting the octanoylated domains into lipoylated derivatives. This Zymomonas mobilis subsp. mobilis (strain ATCC 31821 / ZM4 / CP4) protein is Lipoyl synthase.